The following is a 430-amino-acid chain: Adenylosuccinate synthetase (430 aa).

GTP is bound by residues 12 to 18 and 40 to 42; these read GDEGKGK and GHT. Asp-13 acts as the Proton acceptor in catalysis. Positions 13 and 40 each coordinate Mg(2+). IMP contacts are provided by residues 13–16, 38–41, Thr-128, Arg-142, Gln-223, Thr-238, and Arg-302; these read DEGK and NAGH. The active-site Proton donor is the His-41. 298 to 304 serves as a coordination point for substrate; that stretch reads TTTGRPR. Residues Arg-304, 330 to 332, and 412 to 414 each bind GTP; these read SID and SVG.

Belongs to the adenylosuccinate synthetase family. Homodimer. Mg(2+) is required as a cofactor.

The protein resides in the cytoplasm. It carries out the reaction IMP + L-aspartate + GTP = N(6)-(1,2-dicarboxyethyl)-AMP + GDP + phosphate + 2 H(+). It functions in the pathway purine metabolism; AMP biosynthesis via de novo pathway; AMP from IMP: step 1/2. Functionally, plays an important role in the de novo pathway of purine nucleotide biosynthesis. Catalyzes the first committed step in the biosynthesis of AMP from IMP. The protein is Adenylosuccinate synthetase of Streptococcus pyogenes serotype M49 (strain NZ131).